The following is an 808-amino-acid chain: Phenylalanine--tRNA ligase beta subunit (808 aa).

The 118-residue stretch at 40–157 folds into the tRNA-binding domain; the sequence is NKGATNVVVG…QSVEPGQDAL (118 aa). Residues 411–486 enclose the B5 domain; sequence RSERVIALDL…RLYGYDELPS (76 aa). Aspartate 464, aspartate 470, glutamate 473, and glutamate 474 together coordinate Mg(2+). The FDX-ACB domain maps to 714–807; the sequence is PRYPAITRDM…VQKQTGAVLR (94 aa).

It belongs to the phenylalanyl-tRNA synthetase beta subunit family. Type 1 subfamily. Tetramer of two alpha and two beta subunits. Mg(2+) serves as cofactor.

The protein resides in the cytoplasm. The enzyme catalyses tRNA(Phe) + L-phenylalanine + ATP = L-phenylalanyl-tRNA(Phe) + AMP + diphosphate + H(+). This chain is Phenylalanine--tRNA ligase beta subunit, found in Shouchella clausii (strain KSM-K16) (Alkalihalobacillus clausii).